The sequence spans 41 residues: Hadrurin (41 aa).

Belongs to the non-disulfide-bridged peptide (NDBP) superfamily. Long chain multifunctional peptide (group 2) family. Expressed by the venom gland.

It is found in the secreted. In terms of biological role, antimicrobial activity against S.typhimurium, K.pneumoniae, E.cloacae, P.aeruginosa, E.coli and S.marcescens. Also shows hemolytic activity when tested in human erythrocytes. In Hoffmannihadrurus aztecus (Mexican scorpion), this protein is Hadrurin.